The chain runs to 276 residues: tRNA dimethylallyltransferase (276 aa).

Residues 9 to 12 form an interaction with substrate tRNA region; it reads DSLS.

This sequence belongs to the IPP transferase family. As to quaternary structure, monomer. Requires Mg(2+) as cofactor.

It carries out the reaction adenosine(37) in tRNA + dimethylallyl diphosphate = N(6)-dimethylallyladenosine(37) in tRNA + diphosphate. Functionally, catalyzes the transfer of a dimethylallyl group onto the adenine at position 37 in tRNAs that read codons beginning with uridine, leading to the formation of N6-(dimethylallyl)adenosine (i(6)A). The polypeptide is tRNA dimethylallyltransferase (miaA) (Helicobacter pylori (strain HPAG1)).